We begin with the raw amino-acid sequence, 219 residues long: Large ribosomal subunit protein uL3 (219 aa).

The interval 124–154 (FSGSIKRHNQSEGPKSHGSRYHRRPGSMGPI) is disordered.

It belongs to the universal ribosomal protein uL3 family. In terms of assembly, part of the 50S ribosomal subunit. Forms a cluster with proteins L14 and L19.

Its function is as follows. One of the primary rRNA binding proteins, it binds directly near the 3'-end of the 23S rRNA, where it nucleates assembly of the 50S subunit. The protein is Large ribosomal subunit protein uL3 of Phytoplasma mali (strain AT).